The chain runs to 348 residues: tRNA pseudouridine synthase D (348 aa).

Asp-78 acts as the Nucleophile in catalysis. The region spanning 150 to 304 (GLPNFFGPQR…AEGTRRAARL (155 aa)) is the TRUD domain.

Belongs to the pseudouridine synthase TruD family.

It carries out the reaction uridine(13) in tRNA = pseudouridine(13) in tRNA. Responsible for synthesis of pseudouridine from uracil-13 in transfer RNAs. In Anaeromyxobacter dehalogenans (strain 2CP-1 / ATCC BAA-258), this protein is tRNA pseudouridine synthase D.